A 720-amino-acid polypeptide reads, in one-letter code: Mitogen-activated protein kinase 6 (720 aa).

Met1 participates in a covalent cross-link: Peptide (Met-Gly) (interchain with G-Cter in ubiquitin). The Protein kinase domain maps to 20 to 316; that stretch reads YMDLKPLGCG…AEEALSHPYM (297 aa). Residues 26 to 34 and Lys49 each bind ATP; that span reads LGCGGNGLV. Asp152 functions as the Proton acceptor in the catalytic mechanism. Ser189 is subject to Phosphoserine; by PAK1, PAK2 and PAK3. Positions 189 to 191 match the SEG motif motif; the sequence is SEG. The FRIEDE motif motif lies at 332–337; the sequence is FHIEDE. Phosphoserine is present on residues Ser386, Ser452, Ser554, and Ser556. Residues 638-657 form a disordered region; sequence SEMLETEPVEEGKRGERGRE. Basic and acidic residues predominate over residues 647–657; that stretch reads EEGKRGERGRE. Ser683 carries the phosphoserine modification. Polar residues predominate over residues 698-714; the sequence is PSAMKSSPQIPHKTYSN. The disordered stretch occupies residues 698-720; it reads PSAMKSSPQIPHKTYSNILKHLN.

It belongs to the protein kinase superfamily. CMGC Ser/Thr protein kinase family. MAP kinase subfamily. In terms of assembly, heterodimer with ERK4/MAPK4. Interacts with (via FRIEDE motif) MAPKAPK5. Interacts with UBE3A; this interaction may be indirect and mediated by HERC2, possibly via HERC2 interaction with NEURL4. Mg(2+) serves as cofactor. Post-translationally, phosphorylated at Ser-189 by PAK1, PAK2 and PAK3 resulting in catalytic activation. Phosphorylated by MAPKAPK5 at other sites. In terms of processing, ubiquitination at Met-1 leads to degradation by the proteasome pathway. Highest levels within the nervous system, expressed in different tissues, mostly in skeletal muscle.

The protein localises to the cytoplasm. It localises to the nucleus. It catalyses the reaction L-seryl-[protein] + ATP = O-phospho-L-seryl-[protein] + ADP + H(+). The catalysed reaction is L-threonyl-[protein] + ATP = O-phospho-L-threonyl-[protein] + ADP + H(+). Its activity is regulated as follows. Activated by phosphorylation at Ser-189. Its function is as follows. Atypical MAPK protein. Phosphorylates microtubule-associated protein 2 (MAP2) and MAPKAPK5. The precise role of the complex formed with MAPKAPK5 is still unclear, but the complex follows a complex set of phosphorylation events: upon interaction with atypical MAPKAPK5, ERK3/MAPK6 is phosphorylated at Ser-189 and then mediates phosphorylation and activation of MAPKAPK5, which in turn phosphorylates ERK3/MAPK6. May promote entry in the cell cycle. This Rattus norvegicus (Rat) protein is Mitogen-activated protein kinase 6 (Mapk6).